Consider the following 499-residue polypeptide: Hexokinase-2, chloroplastic (499 aa).

The transit peptide at 1 to 30 (MSVTVSSPAGRSFHISRSPYKKISKPRVII) directs the protein to the chloroplast. The 452-residue stretch at 39–490 (LAVAPILTKL…SGIGAALLAA (452 aa)) folds into the Hexokinase domain. The interval 94 to 232 (TGNEKGLFYA…GLGMQVSALV (139 aa)) is hexokinase small subdomain. ADP contacts are provided by Gly108, Thr109, and Asn110. Thr198, Lys199, Asn233, and Asp234 together coordinate D-glucose. The tract at residues 233–479 (NDTVATLAGA…KNVVIEHSKD (247 aa)) is hexokinase large subdomain. Thr257 is a binding site for ADP. Positions 260, 288, and 318 each coordinate D-glucose. An ADP-binding site is contributed by Gly444.

The protein belongs to the hexokinase family. As to expression, expressed in vascular starch sheath, xylem parenchyma, guard cells and root tips.

Its subcellular location is the plastid. The protein localises to the chloroplast stroma. The enzyme catalyses a D-hexose + ATP = a D-hexose 6-phosphate + ADP + H(+). It catalyses the reaction D-fructose + ATP = D-fructose 6-phosphate + ADP + H(+). It carries out the reaction D-glucose + ATP = D-glucose 6-phosphate + ADP + H(+). Its pathway is carbohydrate metabolism; hexose metabolism. The protein operates within carbohydrate degradation; glycolysis; D-glyceraldehyde 3-phosphate and glycerone phosphate from D-glucose: step 1/4. Functionally, fructose and glucose phosphorylating enzyme. This Nicotiana tabacum (Common tobacco) protein is Hexokinase-2, chloroplastic (HXK2).